The following is a 209-amino-acid chain: Orotate phosphoribosyltransferase (209 aa).

Residues Arg-98, Lys-102, His-104, and 124-132 (EDLISTGKS) each bind 5-phospho-alpha-D-ribose 1-diphosphate. Orotate is bound at residue Ser-128.

It belongs to the purine/pyrimidine phosphoribosyltransferase family. PyrE subfamily. In terms of assembly, homodimer. Requires Mg(2+) as cofactor.

It carries out the reaction orotidine 5'-phosphate + diphosphate = orotate + 5-phospho-alpha-D-ribose 1-diphosphate. It functions in the pathway pyrimidine metabolism; UMP biosynthesis via de novo pathway; UMP from orotate: step 1/2. Functionally, catalyzes the transfer of a ribosyl phosphate group from 5-phosphoribose 1-diphosphate to orotate, leading to the formation of orotidine monophosphate (OMP). The polypeptide is Orotate phosphoribosyltransferase (Malacoplasma penetrans (strain HF-2) (Mycoplasma penetrans)).